Here is a 662-residue protein sequence, read N- to C-terminus: UvrABC system protein B (662 aa).

The Helicase ATP-binding domain maps to 31 to 188 (DNIEGGEKAQ…NDLVDIQFER (158 aa)). Residue 44–51 (GATGTGKT) coordinates ATP. The Beta-hairpin signature appears at 97–120 (YYDYYQPEAYVPSSDTYIEKDSSV). Positions 435–601 (QIDDLLGEIN…TIKKEIRDLI (167 aa)) constitute a Helicase C-terminal domain. Residues 626–661 (KDMIKKLEGQMQEAAGLLDFELAAQIRDMILEIKAM) enclose the UVR domain.

Belongs to the UvrB family. As to quaternary structure, forms a heterotetramer with UvrA during the search for lesions. Interacts with UvrC in an incision complex.

It is found in the cytoplasm. The UvrABC repair system catalyzes the recognition and processing of DNA lesions. A damage recognition complex composed of 2 UvrA and 2 UvrB subunits scans DNA for abnormalities. Upon binding of the UvrA(2)B(2) complex to a putative damaged site, the DNA wraps around one UvrB monomer. DNA wrap is dependent on ATP binding by UvrB and probably causes local melting of the DNA helix, facilitating insertion of UvrB beta-hairpin between the DNA strands. Then UvrB probes one DNA strand for the presence of a lesion. If a lesion is found the UvrA subunits dissociate and the UvrB-DNA preincision complex is formed. This complex is subsequently bound by UvrC and the second UvrB is released. If no lesion is found, the DNA wraps around the other UvrB subunit that will check the other stand for damage. This is UvrABC system protein B from Streptococcus sanguinis (strain SK36).